We begin with the raw amino-acid sequence, 276 residues long: ADP-dependent (S)-NAD(P)H-hydrate dehydratase (276 aa).

The YjeF C-terminal domain occupies 7-275; that stretch reads TEEHVRATLP…DILPRVWKRF (269 aa). (6S)-NADPHX-binding residues include Ala-42, Gly-104, and His-149. AMP is bound by residues 186-190 and Gly-215; that span reads KGNQT. Asp-216 provides a ligand contact to (6S)-NADPHX.

The protein belongs to the NnrD/CARKD family. Homotetramer. Mg(2+) is required as a cofactor.

The enzyme catalyses (6S)-NADHX + ADP = AMP + phosphate + NADH + H(+). The catalysed reaction is (6S)-NADPHX + ADP = AMP + phosphate + NADPH + H(+). Functionally, catalyzes the dehydration of the S-form of NAD(P)HX at the expense of ADP, which is converted to AMP. Together with NAD(P)HX epimerase, which catalyzes the epimerization of the S- and R-forms, the enzyme allows the repair of both epimers of NAD(P)HX, a damaged form of NAD(P)H that is a result of enzymatic or heat-dependent hydration. This Bacillus subtilis (strain 168) protein is ADP-dependent (S)-NAD(P)H-hydrate dehydratase.